Here is a 418-residue protein sequence, read N- to C-terminus: Delta(14)-sterol reductase TM7SF2 (418 aa).

Transmembrane regions (helical) follow at residues 13–35 (FGGP…HLLL), 62–81 (ALLL…LLPA), 102–124 (GFQA…LPLS), 129–148 (MLLP…SLLL), 255–277 (FGFM…QAQF), and 287–304 (WPLA…YYIF). Residues K311, R315, L338, W343, and 350-351 (NY) contribute to the NADP(+) site. A helical membrane pass occupies residues 355-377 (LIMALAWSLPCGVFHLLPYFYFL). NADP(+) is bound by residues D390, 394 to 398 (CRQKY), and Y405.

The protein belongs to the ERG4/ERG24 family. In terms of tissue distribution, highly expressed in liver and brain.

The protein localises to the microsome membrane. The protein resides in the endoplasmic reticulum membrane. The catalysed reaction is 4,4-dimethyl-5alpha-cholesta-8,24-dien-3beta-ol + NADP(+) = 4,4-dimethyl-5alpha-cholesta-8,14,24-trien-3beta-ol + NADPH + H(+). It catalyses the reaction 5alpha-cholest-8,14-dien-3beta-ol + NADPH + H(+) = 5alpha-cholest-8-en-3beta-ol + NADP(+). The enzyme catalyses 4,4-dimethyl-8,14-cholestadien-3beta-ol + NADPH + H(+) = 4,4-dimethyl-5alpha-cholest-8-en-3beta-ol + NADP(+). The protein operates within steroid biosynthesis; cholesterol biosynthesis. In terms of biological role, catalyzes the reduction of the C14-unsaturated bond of lanosterol, as part of the metabolic pathway leading to cholesterol biosynthesis. This is Delta(14)-sterol reductase TM7SF2 (TM7SF2) from Bos taurus (Bovine).